Here is a 466-residue protein sequence, read N- to C-terminus: Soluble pyridine nucleotide transhydrogenase (466 aa).

FAD is bound at residue 36–45 (ERYHNVGGGC).

This sequence belongs to the class-I pyridine nucleotide-disulfide oxidoreductase family. Requires FAD as cofactor.

The protein localises to the cytoplasm. The enzyme catalyses NAD(+) + NADPH = NADH + NADP(+). Its function is as follows. Conversion of NADPH, generated by peripheral catabolic pathways, to NADH, which can enter the respiratory chain for energy generation. This Citrobacter koseri (strain ATCC BAA-895 / CDC 4225-83 / SGSC4696) protein is Soluble pyridine nucleotide transhydrogenase.